The sequence spans 220 residues: Ribonuclease HII (220 aa).

The RNase H type-2 domain occupies 16–216; sequence PVFAGIDEAG…VRPNPAAEEQ (201 aa). A divalent metal cation-binding residues include D22, E23, and D114.

Belongs to the RNase HII family. Mn(2+) serves as cofactor. Mg(2+) is required as a cofactor.

Its subcellular location is the cytoplasm. The catalysed reaction is Endonucleolytic cleavage to 5'-phosphomonoester.. Functionally, endonuclease that specifically degrades the RNA of RNA-DNA hybrids. This is Ribonuclease HII from Nitratidesulfovibrio vulgaris (strain ATCC 29579 / DSM 644 / CCUG 34227 / NCIMB 8303 / VKM B-1760 / Hildenborough) (Desulfovibrio vulgaris).